The chain runs to 145 residues: Probable inactive ribonuclease-like protein 12 (145 aa).

Residues 1–19 (MVLMVVVFLLLLFWENELT) form the signal peptide.

It belongs to the pancreatic ribonuclease family.

It is found in the secreted. In terms of biological role, does not exhibit any ribonuclease activity. The sequence is that of Probable inactive ribonuclease-like protein 12 (Rnase12) from Mus musculus (Mouse).